The primary structure comprises 383 residues: MDALEITQKLISYPTITPKECGIFEYIKSLFPHFKTLECGENGVKNLFLYRIFNPPKDHAEEKHAKENTKPLHFCFAGHIDVVPPGNHWQSDPFKPVIKEGFLYGRGAQDMKGGVGAFLSASLNFNPKTPFLLSILLTSDEEGPGIFGTRLMLEKLKEKDLLPHMAIVAEPTCEKVLGDSIKIGRRGSINGKLILKGVQGHVAYPQKCQNPIDTLASVLPLISGVNLDNGDEYFDPSKLVITNLHAGLGANNITPASVEIIFNARHSLKTTKESLKEYLEKVLKDLPYTLELESSSSPFITASHSKLTSVLKENILKTCHTTPLLNTKGGTSDARFFSAHGIEVVEFGVINDRIHAIDERVSLKELELLEKVFLGVLEGLSEA.

Histidine 79 contacts Zn(2+). Aspartate 81 is an active-site residue. Aspartate 110 serves as a coordination point for Zn(2+). Catalysis depends on glutamate 141, which acts as the Proton acceptor. The Zn(2+) site is built by glutamate 142, glutamate 170, and histidine 355.

The protein belongs to the peptidase M20A family. DapE subfamily. Homodimer. Requires Zn(2+) as cofactor. Co(2+) serves as cofactor.

The enzyme catalyses N-succinyl-(2S,6S)-2,6-diaminopimelate + H2O = (2S,6S)-2,6-diaminopimelate + succinate. Its pathway is amino-acid biosynthesis; L-lysine biosynthesis via DAP pathway; LL-2,6-diaminopimelate from (S)-tetrahydrodipicolinate (succinylase route): step 3/3. In terms of biological role, catalyzes the hydrolysis of N-succinyl-L,L-diaminopimelic acid (SDAP), forming succinate and LL-2,6-diaminopimelate (DAP), an intermediate involved in the bacterial biosynthesis of lysine and meso-diaminopimelic acid, an essential component of bacterial cell walls. This Helicobacter pylori (strain ATCC 700392 / 26695) (Campylobacter pylori) protein is Succinyl-diaminopimelate desuccinylase.